A 269-amino-acid chain; its full sequence is Thiazole synthase (269 aa).

K112 acts as the Schiff-base intermediate with DXP in catalysis. 1-deoxy-D-xylulose 5-phosphate is bound by residues G173, 199–200 (AG), and 221–222 (NT).

It belongs to the ThiG family. As to quaternary structure, homotetramer. Forms heterodimers with either ThiH or ThiS.

The protein resides in the cytoplasm. The catalysed reaction is [ThiS sulfur-carrier protein]-C-terminal-Gly-aminoethanethioate + 2-iminoacetate + 1-deoxy-D-xylulose 5-phosphate = [ThiS sulfur-carrier protein]-C-terminal Gly-Gly + 2-[(2R,5Z)-2-carboxy-4-methylthiazol-5(2H)-ylidene]ethyl phosphate + 2 H2O + H(+). The protein operates within cofactor biosynthesis; thiamine diphosphate biosynthesis. Its function is as follows. Catalyzes the rearrangement of 1-deoxy-D-xylulose 5-phosphate (DXP) to produce the thiazole phosphate moiety of thiamine. Sulfur is provided by the thiocarboxylate moiety of the carrier protein ThiS. In vitro, sulfur can be provided by H(2)S. In Caulobacter vibrioides (strain ATCC 19089 / CIP 103742 / CB 15) (Caulobacter crescentus), this protein is Thiazole synthase.